The chain runs to 419 residues: UDP-N-acetylglucosamine 1-carboxyvinyltransferase (419 aa).

Position 22–23 (22–23 (KN)) interacts with phosphoenolpyruvate. Position 93 (R93) interacts with UDP-N-acetyl-alpha-D-glucosamine. The Proton donor role is filled by C117. C117 is modified (2-(S-cysteinyl)pyruvic acid O-phosphothioketal). 2 residues coordinate UDP-N-acetyl-alpha-D-glucosamine: D307 and I329.

Belongs to the EPSP synthase family. MurA subfamily.

It is found in the cytoplasm. The enzyme catalyses phosphoenolpyruvate + UDP-N-acetyl-alpha-D-glucosamine = UDP-N-acetyl-3-O-(1-carboxyvinyl)-alpha-D-glucosamine + phosphate. Its pathway is cell wall biogenesis; peptidoglycan biosynthesis. Functionally, cell wall formation. Adds enolpyruvyl to UDP-N-acetylglucosamine. The sequence is that of UDP-N-acetylglucosamine 1-carboxyvinyltransferase from Shewanella sp. (strain ANA-3).